The sequence spans 260 residues: Phosphate import ATP-binding protein PstB (260 aa).

One can recognise an ABC transporter domain in the interval 14-255 (IETENLNLFY…PKNTKTEEYI (242 aa)). Residue 46 to 53 (GPSGCGKS) coordinates ATP.

It belongs to the ABC transporter superfamily. Phosphate importer (TC 3.A.1.7) family. As to quaternary structure, the complex is composed of two ATP-binding proteins (PstB), two transmembrane proteins (PstC and PstA) and a solute-binding protein (PstS).

The protein resides in the cell inner membrane. It catalyses the reaction phosphate(out) + ATP + H2O = ADP + 2 phosphate(in) + H(+). Functionally, part of the ABC transporter complex PstSACB involved in phosphate import. Responsible for energy coupling to the transport system. The protein is Phosphate import ATP-binding protein PstB of Borreliella afzelii (strain PKo) (Borrelia afzelii).